A 210-amino-acid chain; its full sequence is N-(5'-phosphoribosyl)anthranilate isomerase (210 aa).

This sequence belongs to the TrpF family.

It carries out the reaction N-(5-phospho-beta-D-ribosyl)anthranilate = 1-(2-carboxyphenylamino)-1-deoxy-D-ribulose 5-phosphate. Its pathway is amino-acid biosynthesis; L-tryptophan biosynthesis; L-tryptophan from chorismate: step 3/5. The chain is N-(5'-phosphoribosyl)anthranilate isomerase from Staphylococcus aureus (strain Mu3 / ATCC 700698).